The sequence spans 151 residues: MSTSARRRLMRDFKRMQTDPPAGVSASPVADNVMTWNAVIIGPADTPFEDGTFRLVMHFEEQYPNKPPGVKFISQMFHPNVYGTGELCLDILQNRWSPTYDVAAILTSIQSLLNDPNTSSPANVEASNLYRDNRKEYIKRVRETVEKSWEE.

The segment at 1–26 is disordered; it reads MSTSARRRLMRDFKRMQTDPPAGVSA. One can recognise a UBC core domain in the interval 4 to 150; that stretch reads SARRRLMRDF…VRETVEKSWE (147 aa). Catalysis depends on C88, which acts as the Glycyl thioester intermediate.

Belongs to the ubiquitin-conjugating enzyme family.

Its subcellular location is the cytoplasm. It is found in the nucleus. It carries out the reaction S-ubiquitinyl-[E1 ubiquitin-activating enzyme]-L-cysteine + [E2 ubiquitin-conjugating enzyme]-L-cysteine = [E1 ubiquitin-activating enzyme]-L-cysteine + S-ubiquitinyl-[E2 ubiquitin-conjugating enzyme]-L-cysteine.. It participates in protein modification; protein ubiquitination. Its function is as follows. Catalyzes the covalent attachment of ubiquitin to other proteins. Plays a role in transcription regulation by catalyzing the monoubiquitination of histone H2B to form H2BK123ub1. H2BK123ub1 gives a specific tag for epigenetic transcriptional activation and is also a prerequisite for H3K4me and H3K79me formation. Also involved in postreplication repair of UV-damaged DNA, in N-end rule-dependent protein degradation and in sporulation. The chain is Ubiquitin-conjugating enzyme E2 2 (uvsJ) from Emericella nidulans (strain FGSC A4 / ATCC 38163 / CBS 112.46 / NRRL 194 / M139) (Aspergillus nidulans).